Here is a 383-residue protein sequence, read N- to C-terminus: ATP phosphoribosyltransferase regulatory subunit (383 aa).

The protein belongs to the class-II aminoacyl-tRNA synthetase family. HisZ subfamily. Heteromultimer composed of HisG and HisZ subunits.

It is found in the cytoplasm. It participates in amino-acid biosynthesis; L-histidine biosynthesis; L-histidine from 5-phospho-alpha-D-ribose 1-diphosphate: step 1/9. Functionally, required for the first step of histidine biosynthesis. May allow the feedback regulation of ATP phosphoribosyltransferase activity by histidine. This chain is ATP phosphoribosyltransferase regulatory subunit, found in Neisseria gonorrhoeae (strain NCCP11945).